Here is a 1224-residue protein sequence, read N- to C-terminus: ATP-dependent helicase/nuclease subunit A (1224 aa).

In terms of domain architecture, UvrD-like helicase ATP-binding spans 15-480 (VIWTDAQWQS…IDLSQNFRSR (466 aa)). 36-43 (AAAGSGKT) serves as a coordination point for ATP. The UvrD-like helicase C-terminal domain maps to 497–791 (EQVGEISYDD…RMMTIHSSKG (295 aa)).

Belongs to the helicase family. AddA subfamily. As to quaternary structure, heterodimer of AddA and AddB/RexB. Requires Mg(2+) as cofactor.

It carries out the reaction Couples ATP hydrolysis with the unwinding of duplex DNA by translocating in the 3'-5' direction.. It catalyses the reaction ATP + H2O = ADP + phosphate + H(+). The heterodimer acts as both an ATP-dependent DNA helicase and an ATP-dependent, dual-direction single-stranded exonuclease. Recognizes the chi site generating a DNA molecule suitable for the initiation of homologous recombination. The AddA nuclease domain is required for chi fragment generation; this subunit has the helicase and 3' -&gt; 5' nuclease activities. The chain is ATP-dependent helicase/nuclease subunit A from Staphylococcus epidermidis (strain ATCC 12228 / FDA PCI 1200).